Consider the following 287-residue polypeptide: Aquaporin PIP1-2 (287 aa).

Residues 1 to 37 (MEGKEEDVRLGANKFTERQPIGTAAQSQDKDYKEPPP) form a disordered region. The Cytoplasmic segment spans residues 1-55 (MEGKEEDVRLGANKFTERQPIGTAAQSQDKDYKEPPPAPLFEPGELSSWSFYRAG). The helical transmembrane segment at 56–76 (IAEFVATFLFLYITILTVMGV) threads the bilayer. Topologically, residues 77-89 (VKSSTKCSTVGIQ) are extracellular. The helical transmembrane segment at 90 to 110 (GIAWAFGGMIFALVYCTAGIS) threads the bilayer. At 111 to 133 (GGHINPAVTFGLFLARKLSLTRA) the chain is on the cytoplasmic side. Positions 115 to 117 (NPA) match the NPA 1 motif. Residues 134 to 154 (LFYMVMQCLGAICGAGVVKGF) form a helical membrane-spanning segment. Residues 155 to 175 (QKGLYENNGGGANVVAPGYTK) lie on the Extracellular side of the membrane. A helical transmembrane segment spans residues 176-196 (GDGLGAEIVGTFILVYTVFSA). Residues 197 to 209 (TDAKRSARDSHVP) are Cytoplasmic-facing. Residues 210-230 (ILAPLPIGFAVFLVHLATIPI) form a helical membrane-spanning segment. The Extracellular portion of the chain corresponds to 231-257 (TGTGINPARSLGAAIIYNKGHAWDDHW). The short motif at 236 to 238 (NPA) is the NPA 2 element. Residues 258 to 278 (IFWVGPFIGAALAALYHQVVI) traverse the membrane as a helical segment. Over 279–287 (RAIPFKSRS) the chain is Cytoplasmic.

The protein belongs to the MIP/aquaporin (TC 1.A.8) family. PIP (TC 1.A.8.11) subfamily. Barely detectable in roots, leaves and fruits.

It is found in the cell membrane. Water channel required to facilitate the transport of water across cell membrane; mercury-insensitive. Contributes to the tolerance to multiple abiotic stresses including salt (NaCl), cold and water deprivation, by modulating cytosolic K(+)/Na(+) ratio, maintaining osmotic balance, and reducing membrane injury (e.g. oxidative injury). The chain is Aquaporin PIP1-2 from Musa acuminata subsp. malaccensis (Wild banana).